The primary structure comprises 337 residues: MVREKVTVSTRTLQWKCVESRTDSKRLYYGRFILSPLMKGQADTIGIAMRRALLGEIEGTCITRVKSEKVPHEYSTITGIQESVHEILMNLKEIVLRSNLYGTSEASICVKGPGYVTAQDIILPPYVEIVDNTQHIASLTEPIDFCIGLQIERNRGYLIKTPHNFQDGSYPIDAVFMPVRNANHSIHSYGNGNEKQEILFIEIWTNGSLTPKEALHDASRNLIDLFIPFLHMEEDNLYLQDNQHTVPLSPFTFHDKLAKLIKNKKKIALKSIFIDQSELSSRIYNCLKMSNIYTLLDLLNNSQEDLMKIEHFRSEDIKQILDILEKYFVIDLAKNKF.

The tract at residues 1–233 (MVREKVTVST…DLFIPFLHME (233 aa)) is alpha N-terminal domain (alpha-NTD). Residues 265–337 (KKIALKSIFI…FVIDLAKNKF (73 aa)) are alpha C-terminal domain (alpha-CTD).

Belongs to the RNA polymerase alpha chain family. As to quaternary structure, in plastids the minimal PEP RNA polymerase catalytic core is composed of four subunits: alpha, beta, beta', and beta''. When a (nuclear-encoded) sigma factor is associated with the core the holoenzyme is formed, which can initiate transcription.

The protein localises to the plastid. Its subcellular location is the chloroplast. The catalysed reaction is RNA(n) + a ribonucleoside 5'-triphosphate = RNA(n+1) + diphosphate. In terms of biological role, DNA-dependent RNA polymerase catalyzes the transcription of DNA into RNA using the four ribonucleoside triphosphates as substrates. The polypeptide is DNA-directed RNA polymerase subunit alpha (Solanum lycopersicum (Tomato)).